The following is a 519-amino-acid chain: Tetratricopeptide repeat protein 31 (519 aa).

Positions 147–197 (QKLLVTEEEANRLAEELVAEEERMKQKAEKKRLKKKRQKERKRQERLEQYC) form a coiled coil. The span at 175–187 (EKKRLKKKRQKER) shows a compositional bias: basic residues. Disordered stretches follow at residues 175-230 (EKKR…EEDS) and 253-294 (RREK…VQAS). At Ser278 the chain carries Phosphoserine. TPR repeat units follow at residues 305–338 (SQEL…NPQD), 339–372 (HRLF…RPGW), and 373–406 (PRGL…GSQP). The disordered stretch occupies residues 474–506 (PSCHRSHPNQPLSQTQSRRPHPLKPQDPSKGWD). A compositionally biased stretch (polar residues) spans 481–490 (PNQPLSQTQS).

The chain is Tetratricopeptide repeat protein 31 (TTC31) from Homo sapiens (Human).